We begin with the raw amino-acid sequence, 202 residues long: MTPLLAAGWPALIAALVLGYACGAIPFGLILTKVAGLGDVRTIGSGNIGATNVLRTGRKGLAAATLLCDALKGTLPVLAAGQWGEGPALAAGLGAFLGHLFPVWLGFKGGKGVATFIGVLLALSPLTLAAFAAIWLGLAFALKYSSLAALAASAATPVILWALGHGGVAALFLVLAALLWWKHAPNIRRLAAGTEGRIGQKG.

Transmembrane regions (helical) follow at residues alanine 11–leucine 31, proline 87–phenylalanine 107, phenylalanine 116–leucine 136, and valine 158–leucine 178.

This sequence belongs to the PlsY family. In terms of assembly, probably interacts with PlsX.

It localises to the cell inner membrane. The catalysed reaction is an acyl phosphate + sn-glycerol 3-phosphate = a 1-acyl-sn-glycero-3-phosphate + phosphate. It participates in lipid metabolism; phospholipid metabolism. In terms of biological role, catalyzes the transfer of an acyl group from acyl-phosphate (acyl-PO(4)) to glycerol-3-phosphate (G3P) to form lysophosphatidic acid (LPA). This enzyme utilizes acyl-phosphate as fatty acyl donor, but not acyl-CoA or acyl-ACP. This Methylorubrum populi (strain ATCC BAA-705 / NCIMB 13946 / BJ001) (Methylobacterium populi) protein is Glycerol-3-phosphate acyltransferase.